The chain runs to 341 residues: Methionine import ATP-binding protein MetN 1 (341 aa).

The 240-residue stretch at 2–241 (IEFRQVSKTF…PKTTIAQNFV (240 aa)) folds into the ABC transporter domain. 38 to 45 (GYSGAGKS) is a binding site for ATP.

Belongs to the ABC transporter superfamily. Methionine importer (TC 3.A.1.24) family. The complex is composed of two ATP-binding proteins (MetN), two transmembrane proteins (MetI) and a solute-binding protein (MetQ).

It is found in the cell membrane. The enzyme catalyses L-methionine(out) + ATP + H2O = L-methionine(in) + ADP + phosphate + H(+). It carries out the reaction D-methionine(out) + ATP + H2O = D-methionine(in) + ADP + phosphate + H(+). Functionally, part of the ABC transporter complex MetNIQ involved in methionine import. Responsible for energy coupling to the transport system. This Staphylococcus aureus (strain MW2) protein is Methionine import ATP-binding protein MetN 1.